A 593-amino-acid polypeptide reads, in one-letter code: Protein GAMETE EXPRESSED 1 (593 aa).

Residues 1-24 (MDRFSRKCLLFLLLIILLDSPLTC) form the signal peptide. At 25 to 427 (HSWGWFSSSS…LHNAMLLESR (403 aa)) the chain is on the extracellular side. Coiled coils occupy residues 156-194 (CQQLQSNAFKNEIERLVNELKNTAQYTEDKLDILESKSD) and 350-387 (EALQESRNTLQRLKEFSQEQQEDLAKRQEKLQEVHDHL). A helical membrane pass occupies residues 428-448 (VIKAFVIYFLSIFVIYMFTST). Over 449–457 (KQTYIIRPR) the chain is Cytoplasmic. The helical transmembrane segment at 458 to 476 (LYIGLCVTLALEVASLRYV) threads the bilayer. Residues 477–485 (NDTERQAWM) are Extracellular-facing. Residues 486–506 (INLIRSLFALLASAQLLHAAL) form a helical membrane-spanning segment. At 507–593 (SYRDYEVLNH…TRRLYNFRPR (87 aa)) the chain is on the cytoplasmic side.

As to quaternary structure, homodimer. In tricellular pollen, expressed in mature sperm cells. Not expressed in bicellular or unicellular pollen. Detected in ovules, roots and guard cells. Expressed in the embryo sac before cellularization, in the egg cell after cellularization, in the zygote/embryo immediately after fertilization and in the pollen vegetative cell.

It localises to the cell membrane. Its function is as follows. Has a dual function during gametophyte development and early embryogenesis. Required for correct pollen maturation. This Arabidopsis thaliana (Mouse-ear cress) protein is Protein GAMETE EXPRESSED 1 (GEX1).